Here is an 86-residue protein sequence, read N- to C-terminus: UPF0297 protein BBR47_19030 (86 aa).

This sequence belongs to the UPF0297 family.

The sequence is that of UPF0297 protein BBR47_19030 from Brevibacillus brevis (strain 47 / JCM 6285 / NBRC 100599).